Reading from the N-terminus, the 498-residue chain is Dynein regulatory complex subunit 5 (498 aa).

Disordered regions lie at residues 27–52 (ALGSSSTGPTSLKTSSTPTPGQLKTK) and 200–223 (MPTPLQGEEQSDSGSEGEGSEPEK). A compositionally biased stretch (low complexity) spans 28–47 (LGSSSTGPTSLKTSSTPTPG). 6 LRR repeats span residues 276–299 (CHTLKIFKLTRSKVDDDKARILIR), 306–327 (ALEELDLSHNLIGDRGARAAAK), 333–353 (RLRVLNLANNQLQAPGAQSLA), 361–382 (NLVFLNLRLNCIEDEGGQAIAH), 389–409 (CLSVLHLGGNKLSEPTATLLS), and 417–438 (TLVSLNLSCNHIGQDGGKQLLE).

This sequence belongs to the DRC5 family. As to quaternary structure, component of the nexin-dynein regulatory complex (N-DRC). Interacts with DRC1. Interacts with FBXL13/DRC6, DRC3 and DRC7. Testis-specific (at protein level).

It is found in the cell projection. Its subcellular location is the cilium. The protein resides in the flagellum. The protein localises to the cytoplasm. It localises to the cytoskeleton. It is found in the flagellum axoneme. Component of the nexin-dynein regulatory complex (N-DRC) a key regulator of ciliary/flagellar motility which maintains the alignment and integrity of the distal axoneme and regulates microtubule sliding in motile axonemes. May play a role in the assembly of N-DRC. Required for sperm motility. The protein is Dynein regulatory complex subunit 5 (Tcte1) of Mus musculus (Mouse).